The following is a 267-amino-acid chain: Glucosamine-6-phosphate deaminase (267 aa).

Asp-72 acts as the Proton acceptor; for enolization step in catalysis. Asp-141 serves as the catalytic For ring-opening step. His-143 acts as the Proton acceptor; for ring-opening step in catalysis. Glu-148 (for ring-opening step) is an active-site residue.

It belongs to the glucosamine/galactosamine-6-phosphate isomerase family. NagB subfamily. Homohexamer.

The catalysed reaction is alpha-D-glucosamine 6-phosphate + H2O = beta-D-fructose 6-phosphate + NH4(+). The protein operates within amino-sugar metabolism; N-acetylneuraminate degradation; D-fructose 6-phosphate from N-acetylneuraminate: step 5/5. Its activity is regulated as follows. Allosterically activated by N-acetylglucosamine 6-phosphate (GlcNAc6P). Its function is as follows. Catalyzes the reversible isomerization-deamination of glucosamine 6-phosphate (GlcN6P) to form fructose 6-phosphate (Fru6P) and ammonium ion. This is Glucosamine-6-phosphate deaminase from Haemophilus ducreyi (strain 35000HP / ATCC 700724).